The chain runs to 209 residues: Protein lin-28 homolog A (209 aa).

The interval 1 to 31 (MGSVSNQQFAGGCAKAAEKAPEEAPPDAARA) is disordered. An N-acetylglycine modification is found at glycine 2. Serine 3 is modified (phosphoserine). Residues 39–112 (HGAGICKWFN…GLESIRVTGP (74 aa)) form the CSD domain. The flexible linker stretch occupies residues 113-136 (GGVFCIGSERRPKGKNMQKRRSKG). Serine 120 carries the post-translational modification Phosphoserine. 2 consecutive CCHC-type zinc fingers follow at residues 137 to 154 (DRCYNCGGLDHHAKECKL) and 159 to 176 (KKCHFCQSINHMVASCPL). The tract at residues 177–209 (KAQQGPSSQGKPAYFREEEEEIHSPALLPEAQN) is disordered. At serine 200 the chain carries Phosphoserine.

Belongs to the lin-28 family. In terms of assembly, monomer. During skeletal muscle differentiation, associated with translation initiation complexes in the polysomal compartment. Directly interacts with EIF3S2. Interacts with NCL in an RNA-dependent manner. Interacts with TUT4 in the presence of pre-let-7 RNA. As to expression, expressed in embryonic stem cells (ES cells), spermatagonia and testis. Expressed in numerous epithelial tissues including the epithelia of the small intestine, the intralobular duct epithelium of the mammary gland and the epithelia of Henle's loop in the kidney and in the collecting duct (at protein level). Also expressed in the myocardium and skeletal muscle (at protein level).

Its subcellular location is the cytoplasm. It is found in the rough endoplasmic reticulum. The protein resides in the P-body. The protein localises to the stress granule. It localises to the nucleus. Its subcellular location is the nucleolus. In terms of biological role, RNA-binding protein that inhibits processing of pre-let-7 miRNAs and regulates translation of mRNAs that control developmental timing, pluripotency and metabolism. Seems to recognize a common structural G-quartet (G4) feature in its miRNA and mRNA targets. 'Translational enhancer' that drives specific mRNAs to polysomes and increases the efficiency of protein synthesis. Its association with the translational machinery and target mRNAs results in an increased number of initiation events per molecule of mRNA and, indirectly, in mRNA stabilization. Binds IGF2 mRNA, MYOD1 mRNA, ARBP/36B4 ribosomal protein mRNA and its own mRNA. Essential for skeletal muscle differentiation program through the translational up-regulation of IGF2 expression. Suppressor of microRNA (miRNA) biogenesis, including that of let-7, miR107, miR-143 and miR-200c. Specifically binds the miRNA precursors (pre-miRNAs), recognizing an 5'-GGAG-3' motif found in pre-miRNA terminal loop, and recruits TUT4 and TUT7 uridylyltransferaseS. This results in the terminal uridylation of target pre-miRNAs. Uridylated pre-miRNAs fail to be processed by Dicer and undergo degradation. The repression of let-7 expression is required for normal development and contributes to maintain the pluripotent state by preventing let-7-mediated differentiation of embryonic stem cells. Localized to the periendoplasmic reticulum area, binds to a large number of spliced mRNAs and inhibits the translation of mRNAs destined for the ER, reducing the synthesis of transmembrane proteins, ER or Golgi lumen proteins, and secretory proteins. Binds to and enhances the translation of mRNAs for several metabolic enzymes, such as PFKP, PDHA1 or SDHA, increasing glycolysis and oxidative phosphorylation. Which, with the let-7 repression may enhance tissue repair in adult tissue. The sequence is that of Protein lin-28 homolog A (Lin28a) from Mus musculus (Mouse).